Here is a 239-residue protein sequence, read N- to C-terminus: 2,3,4,5-tetrahydropyridine-2,6-dicarboxylate N-acetyltransferase (239 aa).

It belongs to the transferase hexapeptide repeat family. DapH subfamily.

It catalyses the reaction (S)-2,3,4,5-tetrahydrodipicolinate + acetyl-CoA + H2O = L-2-acetamido-6-oxoheptanedioate + CoA. Its pathway is amino-acid biosynthesis; L-lysine biosynthesis via DAP pathway; LL-2,6-diaminopimelate from (S)-tetrahydrodipicolinate (acetylase route): step 1/3. Its function is as follows. Catalyzes the transfer of an acetyl group from acetyl-CoA to tetrahydrodipicolinate. In Staphylococcus aureus (strain Newman), this protein is 2,3,4,5-tetrahydropyridine-2,6-dicarboxylate N-acetyltransferase.